Reading from the N-terminus, the 140-residue chain is Lymphocyte antigen 6L (140 aa).

Positions 1 to 20 (MAPLLLVLWASLVSMELTGG) are cleaved as a signal peptide. Positions 31–124 (LSCFECFKVL…GSWEGFWSLP (94 aa)) constitute a UPAR/Ly6 domain. 2 disulfides stabilise this stretch: Cys33–Cys50 and Cys105–Cys110. Ser116 carries GPI-anchor amidated serine lipidation. The propeptide at 117-140 (WEGFWSLPGRLLLPMGLGLFCTLL) is removed in mature form.

Its subcellular location is the cell membrane. This is Lymphocyte antigen 6L from Mus musculus (Mouse).